Reading from the N-terminus, the 496-residue chain is Thiamine transporter 2 (496 aa).

Residues 1–7 (MDCYRTS) are Cytoplasmic-facing. The helical transmembrane segment at 8 to 28 (PSNSWIYTTVILCIFGFFSMM) threads the bilayer. Residues 29 to 53 (RPSEPFLIPYLSGPDKNLTSEEMTN) are Extracellular-facing. A glycan (N-linked (GlcNAc...) asparagine) is linked at Asn-45. A helical transmembrane segment spans residues 54–74 (EIFPVWTYSYLVLLLPVLVLT). The Cytoplasmic portion of the chain corresponds to 75–81 (DYVRYKP). A helical transmembrane segment spans residues 82–102 (VIILQGISFIITWLLLLFGQG). Residues 103-110 (VKTMQVVE) are Extracellular-facing. The chain crosses the membrane as a helical span at residues 111 to 131 (FFYGMVTATEVAYYAYIYSVV). Over 132-144 (SPEHYQRVSGYCR) the chain is Cytoplasmic. The helical transmembrane segment at 145–165 (SVTLVAYTAGSVLAQLLVSLA) threads the bilayer. The N-linked (GlcNAc...) asparagine glycan is linked to Asn-166. Residues 166 to 169 (NLSY) are Extracellular-facing. A helical transmembrane segment spans residues 170–190 (FYLNVISLASVSVAFLFSLFL). The Cytoplasmic portion of the chain corresponds to 191 to 282 (PMPKKSMFFH…YSSKRLFYWS (92 aa)). The tract at residues 210 to 248 (SSSVNPVLEETHEGEAPDCEKQKPTSEIPSTSGKLHKGQ) is disordered. The segment covering 218-233 (EETHEGEAPDCEKQKP) has biased composition (basic and acidic residues). Residues 234 to 248 (TSEIPSTSGKLHKGQ) are compositionally biased toward polar residues. Residues 283 to 303 (LWWAFATAGFNQILNYVQILW) traverse the membrane as a helical segment. Topologically, residues 304-316 (DYKSPSQDSSIYN) are extracellular. A helical transmembrane segment spans residues 317 to 337 (GAVEATATFGGAVAAFAVGYV). Residues 338 to 342 (KVNWD) are Cytoplasmic-facing. A helical membrane pass occupies residues 343–363 (LLGELALAVFSVVNAGSLFLM). Topologically, residues 364 to 375 (HYTANIWACYAG) are extracellular. The chain crosses the membrane as a helical span at residues 376–396 (YLIFKSSYMLLITIAVFQIAV). Topologically, residues 397-405 (NLSVERYAL) are cytoplasmic. A helical membrane pass occupies residues 406–426 (VFGINTFIALVIQTIITVIVV). Over 427–434 (DQRGLNLP) the chain is Extracellular. A helical membrane pass occupies residues 435-455 (ISIQFLVYGSYFAVIAGIFLM). At 456 to 496 (RSMYIIYSTKSQKDVQSPAPSENPDMSHPEEESNAIMSTKL) the chain is on the cytoplasmic side. The tract at residues 469–496 (DVQSPAPSENPDMSHPEEESNAIMSTKL) is disordered.

This sequence belongs to the reduced folate carrier (RFC) transporter (TC 2.A.48) family.

Its subcellular location is the membrane. The catalysed reaction is thiamine(out) + H(+)(in) = thiamine(in) + H(+)(out). It carries out the reaction pyridoxine(out) + n H(+)(out) = pyridoxine(in) + n H(+)(in). Mediates high affinity thiamine uptake, probably via a proton anti-port mechanism. Has no folate transport activity. Mediates H(+)-dependent pyridoxine transport. The polypeptide is Thiamine transporter 2 (SLC19A3) (Macaca fascicularis (Crab-eating macaque)).